Consider the following 686-residue polypeptide: Cyclic nucleotide-gated channel alpha-1 (686 aa).

Residues 1 to 165 lie on the Cytoplasmic side of the membrane; that stretch reads MKNNIINTQQ…PSGNTYYNWL (165 aa). Disordered regions lie at residues 31–75 and 87–149; these read ENGA…PSQR and NVNN…EEKK. Residues 39–53 are compositionally biased toward acidic residues; the sequence is SEDDDSASTSEESEN. The segment covering 110–124 has biased composition (basic and acidic residues); that stretch reads SKSDDKNENKNDPEK. The segment covering 125–134 has biased composition (basic residues); it reads KKKKKDKEKK. Positions 135–149 are enriched in basic and acidic residues; that stretch reads KKEEKSKDKKEEEKK. Residues 166-187 traverse the membrane as a helical segment; that stretch reads FCITLPVMYNWTMVIARACFDE. At 188 to 197 the chain is on the extracellular side; the sequence is LQSDYLEYWL. A helical membrane pass occupies residues 198 to 218; the sequence is ILDYVSDIVYLIDMFVRTRTG. At 219 to 243 the chain is on the cytoplasmic side; that stretch reads YLEQGLLVKEELKLINKYKSNLQFK. A helical membrane pass occupies residues 244 to 262; sequence LDVLSLIPTDLLYFKLGWN. At 263 to 267 the chain is on the extracellular side; the sequence is YPEIR. Residues 268–286 form a helical membrane-spanning segment; sequence LNRLLRFSRMFEFFQRTET. The Cytoplasmic portion of the chain corresponds to 287-293; the sequence is RTNYPNI. Residues 291 to 399 form an ion conduction pathway region; it reads PNIFRISNLV…GNIGSMISNM (109 aa). The helical transmembrane segment at 294–317 threads the bilayer; sequence FRISNLVMYIVIIIHWNACVFYSI. Residues 318–340 lie on the Extracellular side of the membrane; sequence SKAIGFGNDTWVYPDINDPEFGR. N-linked (GlcNAc...) asparagine glycosylation occurs at asparagine 325. Helical transmembrane passes span 341-375 and 376-400; these read LARK…VFVV and VDFL…SNMN. The segment at 358 to 361 is selectivity filter; it reads TIGE. Residues 401–477 form a C-linker region; it reads AARAEFQARI…DTLKKVRIFA (77 aa). Over 401-686 the chain is Cytoplasmic; the sequence is AARAEFQARI…GAESGPIDST (286 aa). The segment at 481-601 is cyclic nucleotide-binding domain; sequence AGLLVELVLK…EEKGKQILMK (121 aa). 3',5'-cyclic GMP contacts are provided by glycine 541, serine 544, arginine 557, and threonine 558. Residues arginine 557 and threonine 558 each contribute to the 3',5'-cyclic AMP site. Residues 619–673 are a coiled coil; the sequence is LEEKVTRMEGSVDLLQTRFARILAEYESMQQKLKQRLTKVEKFLKPLIDTEFSSI.

Belongs to the cyclic nucleotide-gated cation channel (TC 1.A.1.5) family. CNGA1 subfamily. As to quaternary structure, forms heterotetrameric channels composed of CNGA1 and CNGB1 subunits with 3:1 stoichiometry. May also form cyclic nucleotide-activated homotetrameric channels, that are efficiently activated by saturating cGMP, but poorly activated by saturating cAMP compared to the heterotetramer with CNGB1. The channel binds Ca(2+)-bound CALM1 via CaM1 and CaM2 regions of the CNGB1 subunit; this interaction modulates the affinity of the channel for cNMPs in response to intracellular Ca(2+) levels. Rod cells in the retina.

Its subcellular location is the cell membrane. The catalysed reaction is Ca(2+)(in) = Ca(2+)(out). It carries out the reaction Na(+)(in) = Na(+)(out). It catalyses the reaction K(+)(in) = K(+)(out). The enzyme catalyses NH4(+)(in) = NH4(+)(out). The catalysed reaction is Rb(+)(in) = Rb(+)(out). It carries out the reaction Li(+)(in) = Li(+)(out). It catalyses the reaction Cs(+)(in) = Cs(+)(out). Channel opening is activated by cGMP and at a much lesser extent by cAMP. Ca(2+) binding concominantly blocks monovalent cation currents. Inhibited by L-cis-diltiazem. Its function is as follows. Pore-forming subunit of the rod cyclic nucleotide-gated channel. Mediates rod photoresponses at dim light converting transient changes in intracellular cGMP levels into electrical signals. In the dark, cGMP levels are high and keep the channel open enabling a steady inward current carried by Na(+) and Ca(2+) ions that leads to membrane depolarization and neurotransmitter release from synaptic terminals. Upon photon absorption cGMP levels decline leading to channel closure and membrane hyperpolarization that ultimately slows neurotransmitter release and signals the presence of light, the end point of the phototransduction cascade. Conducts cGMP- and cAMP-gated ion currents, with permeability for monovalent and divalent cations. The selectivity for Ca(2+) over Na(+) increases with cGMP concentrations, whereas the selectivity among monovalent ions is independent of the cGMP levels. In Homo sapiens (Human), this protein is Cyclic nucleotide-gated channel alpha-1.